Reading from the N-terminus, the 140-residue chain is Gonadotropin subunit beta-2 (140 aa).

An N-terminal signal peptide occupies residues 1–23 (MSVPASSFLLLCFLMNSFSPAQS). Cystine bridges form between Cys-29/Cys-77, Cys-43/Cys-92, Cys-46/Cys-130, Cys-54/Cys-108, Cys-58/Cys-110, and Cys-113/Cys-120. N-linked (GlcNAc...) asparagine glycosylation occurs at Asn-33.

It belongs to the glycoprotein hormones subunit beta family. As to quaternary structure, heterodimer of an alpha and a beta chain.

Its subcellular location is the secreted. Functionally, involved in gametogenesis and steroidogenesis. The protein is Gonadotropin subunit beta-2 (cgbb) of Ictalurus punctatus (Channel catfish).